Consider the following 426-residue polypeptide: Diaminobutyrate--2-oxoglutarate transaminase (426 aa).

Lys274 carries the N6-(pyridoxal phosphate)lysine modification.

It belongs to the class-III pyridoxal-phosphate-dependent aminotransferase family. Pyridoxal 5'-phosphate serves as cofactor.

It carries out the reaction L-2,4-diaminobutanoate + 2-oxoglutarate = L-aspartate 4-semialdehyde + L-glutamate. The protein operates within amine and polyamine biosynthesis; ectoine biosynthesis; L-ectoine from L-aspartate 4-semialdehyde: step 1/3. In terms of biological role, catalyzes reversively the conversion of L-aspartate beta-semialdehyde (ASA) to L-2,4-diaminobutyrate (DABA) by transamination with L-glutamate. This chain is Diaminobutyrate--2-oxoglutarate transaminase (ectB), found in Oceanobacillus iheyensis (strain DSM 14371 / CIP 107618 / JCM 11309 / KCTC 3954 / HTE831).